We begin with the raw amino-acid sequence, 408 residues long: MSWDQVWIDVNVASMDPSVSAPYGAIIDAALAVKDGKIAWVGPRGELPEFDVMSTPLYRGKGGWITPGLIDAHTHLVFAGNRANEFEKRLQGASYEEIARSGGGIISTVKACREASEAELFELGRKRLNALAKEGVTTVEIKSGYGLDTATELKLLRVARELGKHHHVDVKTTFLGAHAIPPEYKDDVEGYVDLVINEMLPAVIAEDLADAVDVFCENIAFNIEQTERVLTAAKDAGLDIKLHAEQLSNLGGSTMAAKLGAKSVDHIEYLDEDGVVALSKSGTCATLLPGAFYFLRETQMPPIDLLRKHKVPMVLASDYNPGSSPLCSSLLMLNMGCTLFRLTPEEALAGMTRNAAKALGVEDKVGVLAAGMQADFCLWDISTPAELAYSYGVGVCLEVVKDGHLVHQ.

Positions 73 and 75 each coordinate Fe(3+). 2 residues coordinate Zn(2+): H73 and H75. 3 residues coordinate 4-imidazolone-5-propanoate: R82, Y145, and H178. Y145 is an N-formimidoyl-L-glutamate binding site. Residue H243 coordinates Fe(3+). H243 contacts Zn(2+). Q246 provides a ligand contact to 4-imidazolone-5-propanoate. D318 lines the Fe(3+) pocket. D318 lines the Zn(2+) pocket. N-formimidoyl-L-glutamate contacts are provided by N320 and G322. A 4-imidazolone-5-propanoate-binding site is contributed by S323.

The protein belongs to the metallo-dependent hydrolases superfamily. HutI family. The cofactor is Zn(2+). It depends on Fe(3+) as a cofactor.

Its subcellular location is the cytoplasm. The enzyme catalyses 4-imidazolone-5-propanoate + H2O = N-formimidoyl-L-glutamate. It functions in the pathway amino-acid degradation; L-histidine degradation into L-glutamate; N-formimidoyl-L-glutamate from L-histidine: step 3/3. Its function is as follows. Catalyzes the hydrolytic cleavage of the carbon-nitrogen bond in imidazolone-5-propanoate to yield N-formimidoyl-L-glutamate. It is the third step in the universal histidine degradation pathway. This is Imidazolonepropionase from Shewanella woodyi (strain ATCC 51908 / MS32).